Reading from the N-terminus, the 154-residue chain is UPF0178 protein GM21_2006 (154 aa).

This sequence belongs to the UPF0178 family.

The chain is UPF0178 protein GM21_2006 from Geobacter sp. (strain M21).